The following is a 425-amino-acid chain: Glutamyl-tRNA reductase (425 aa).

Substrate contacts are provided by residues threonine 49–arginine 52, serine 109, glutamate 114–glutamine 116, and glutamine 120. Cysteine 50 serves as the catalytic Nucleophile. Glycine 189–serine 194 is a binding site for NADP(+).

Belongs to the glutamyl-tRNA reductase family. Homodimer.

It catalyses the reaction (S)-4-amino-5-oxopentanoate + tRNA(Glu) + NADP(+) = L-glutamyl-tRNA(Glu) + NADPH + H(+). The protein operates within porphyrin-containing compound metabolism; protoporphyrin-IX biosynthesis; 5-aminolevulinate from L-glutamyl-tRNA(Glu): step 1/2. Its pathway is porphyrin-containing compound metabolism; chlorophyll biosynthesis. Functionally, catalyzes the NADPH-dependent reduction of glutamyl-tRNA(Glu) to glutamate 1-semialdehyde (GSA). This chain is Glutamyl-tRNA reductase, found in Picosynechococcus sp. (strain ATCC 27264 / PCC 7002 / PR-6) (Agmenellum quadruplicatum).